Consider the following 257-residue polypeptide: Imidazole glycerol phosphate synthase subunit HisF (257 aa).

Catalysis depends on residues Asp11 and Asp130.

This sequence belongs to the HisA/HisF family. Heterodimer of HisH and HisF.

The protein resides in the cytoplasm. It carries out the reaction 5-[(5-phospho-1-deoxy-D-ribulos-1-ylimino)methylamino]-1-(5-phospho-beta-D-ribosyl)imidazole-4-carboxamide + L-glutamine = D-erythro-1-(imidazol-4-yl)glycerol 3-phosphate + 5-amino-1-(5-phospho-beta-D-ribosyl)imidazole-4-carboxamide + L-glutamate + H(+). It participates in amino-acid biosynthesis; L-histidine biosynthesis; L-histidine from 5-phospho-alpha-D-ribose 1-diphosphate: step 5/9. Its function is as follows. IGPS catalyzes the conversion of PRFAR and glutamine to IGP, AICAR and glutamate. The HisF subunit catalyzes the cyclization activity that produces IGP and AICAR from PRFAR using the ammonia provided by the HisH subunit. This chain is Imidazole glycerol phosphate synthase subunit HisF, found in Shewanella sp. (strain W3-18-1).